We begin with the raw amino-acid sequence, 574 residues long: Phenylalanine--tRNA ligase beta subunit (574 aa).

The region spanning 278–353 (LTPKEFEVEL…IAYGYNEIEP (76 aa)) is the B5 domain. Residues D331, D337, E340, and D341 each contribute to the Mg(2+) site.

This sequence belongs to the phenylalanyl-tRNA synthetase beta subunit family. Type 2 subfamily. In terms of assembly, tetramer of two alpha and two beta subunits. It depends on Mg(2+) as a cofactor.

The protein resides in the cytoplasm. It carries out the reaction tRNA(Phe) + L-phenylalanine + ATP = L-phenylalanyl-tRNA(Phe) + AMP + diphosphate + H(+). This Thermococcus kodakarensis (strain ATCC BAA-918 / JCM 12380 / KOD1) (Pyrococcus kodakaraensis (strain KOD1)) protein is Phenylalanine--tRNA ligase beta subunit.